The following is a 229-amino-acid chain: Potassium/proton antiporter CemA (229 aa).

A run of 4 helical transmembrane segments spans residues 7 to 27, 114 to 134, 154 to 174, and 189 to 209; these read FTPL…SLSF, LICF…LLIL, ILLL…ELMI, and IISG…KYWI.

This sequence belongs to the CemA family.

The protein resides in the plastid. Its subcellular location is the chloroplast inner membrane. It carries out the reaction K(+)(in) + H(+)(out) = K(+)(out) + H(+)(in). Functionally, contributes to K(+)/H(+) antiport activity by supporting proton efflux to control proton extrusion and homeostasis in chloroplasts in a light-dependent manner to modulate photosynthesis. Prevents excessive induction of non-photochemical quenching (NPQ) under continuous-light conditions. Indirectly promotes efficient inorganic carbon uptake into chloroplasts. The chain is Potassium/proton antiporter CemA from Gossypium barbadense (Sea Island cotton).